The following is a 329-amino-acid chain: Glyceraldehyde-3-phosphate dehydrogenase 1 (329 aa).

Residues 11 to 12, aspartate 33, and glutamate 77 contribute to the NAD(+) site; that span reads RI. Serine 148 carries the phosphoserine modification. A D-glyceraldehyde 3-phosphate-binding site is contributed by 148-150; sequence SCT. Cysteine 149 acts as the Nucleophile in catalysis. Residue serine 177 is modified to Phosphoserine. A D-glyceraldehyde 3-phosphate-binding site is contributed by threonine 179. Serine 200 bears the Phosphoserine mark. Residues 208–209 and arginine 231 contribute to the D-glyceraldehyde 3-phosphate site; that span reads TG. Asparagine 313 is a binding site for NAD(+).

The protein belongs to the glyceraldehyde-3-phosphate dehydrogenase family. As to quaternary structure, homotetramer.

Its subcellular location is the cytoplasm. The enzyme catalyses D-glyceraldehyde 3-phosphate + phosphate + NAD(+) = (2R)-3-phospho-glyceroyl phosphate + NADH + H(+). The protein operates within carbohydrate degradation; glycolysis; pyruvate from D-glyceraldehyde 3-phosphate: step 1/5. The polypeptide is Glyceraldehyde-3-phosphate dehydrogenase 1 (Kluyveromyces marxianus (Yeast)).